The following is a 97-amino-acid chain: MSTAPTVTPERSNQTVRKTYPNYKVIVLNDDFNTFQHVAECLVKYIPGMTGDLAWDLTNQVHYEGQAIVWVGPQEPAELYHQQLRRAGLTMAPLEAA.

Belongs to the ClpS family. Binds to the N-terminal domain of the chaperone ClpA.

Functionally, involved in the modulation of the specificity of the ClpAP-mediated ATP-dependent protein degradation. The polypeptide is ATP-dependent Clp protease adapter protein ClpS (Nostoc sp. (strain PCC 7120 / SAG 25.82 / UTEX 2576)).